The sequence spans 295 residues: Defective in cullin neddylation protein AAR3 (295 aa).

Positions 1–180 (MDSSPVSARF…LIDDFVEHMY (180 aa)) constitute a DCUN1 domain. The Nuclear localization signal motif lies at 214 to 221 (YRRPHTGL). A disordered region spans residues 214–251 (YRRPHTGLRNIPGLKRKTSKKNDEEEEDEDEEVLETQN). Acidic residues predominate over residues 237–247 (EEEEDEDEEVL).

Its subcellular location is the nucleus. Its function is as follows. May contribute to the neddylation of all cullins by transferring NEDD8 from N-terminally acetylated NEDD8-conjugating E2s enzyme to different cullin C-terminal domain-RBX complexes; neddylation of cullins play an essential role in the regulation of SCF-type complexes activity. Regulates responses to the synthetic auxin 2,4-dichlorophenoxyacetic acid (2,4-D) in roots, probably by modulating the SCF(TIR1) ubiquitin E3 ligase complex-mediated proteolysis. The chain is Defective in cullin neddylation protein AAR3 from Arabidopsis thaliana (Mouse-ear cress).